Here is a 120-residue protein sequence, read N- to C-terminus: C-C motif chemokine 23 (120 aa).

The first 21 residues, 1–21 (MKVSVAALSCLMLVTALGSQA), serve as a signal peptide directing secretion. 3 disulfides stabilise this stretch: cysteine 54/cysteine 78, cysteine 55/cysteine 94, and cysteine 65/cysteine 105.

This sequence belongs to the intercrine beta (chemokine CC) family. The N-terminal is proteolytically cleaved by proteases associated with inflammatory responses. The processed forms, CCL23(19-99), CCL23(22-99), CCL23(27-99) and CCL23(30-99) exhibit increase in CCR1-mediated signaling and chemotaxis assays in vitro. As to expression, high levels in adult lung, liver, skeletal muscle and pancreas. Moderate levels in fetal liver, adult bone marrow and placenta. The short form is the major species and the longer form was detected only in very low abundance. CCL23(19-99), CCL23(22-99), CCL23(27-99), CCL23(30-99) are found in high levels in synovial fluids from rheumatoid patients.

It is found in the secreted. Shows chemotactic activity for monocytes, resting T-lymphocytes, and neutrophils, but not for activated lymphocytes. Inhibits proliferation of myeloid progenitor cells in colony formation assays. This protein can bind heparin. Binds CCR1. CCL23(19-99), CCL23(22-99), CCL23(27-99), CCL23(30-99) are more potent chemoattractants than CCL23. The chain is C-C motif chemokine 23 (CCL23) from Homo sapiens (Human).